We begin with the raw amino-acid sequence, 616 residues long: MPKYRSATTTHGRNMAGARALWRATGMTDADFGKPIIAVVNSFTQFVPGHVHLRDLGKLVAEQIEAAGGVAKEFNTIAVDDGIAMGHGGMLYSLPSRELIADSVEYMVNAHCADAMVCISNCDKITPGMLMASLRLNIPVIFVSGGPMEAGKTKLSDQIIKLDLVDAMIQGADPKVSDSQSDQVERSACPTCGSCSGMFTANSMNCLTEALGLSQPGNGSLLATHADRKQLFLNAGKRIVELTKRYYEQNDESALPRNIASKAAFENAMTLDIAMGGSTNTVLHLLAAAQEAEIDFTMSDIDKLSRKVPQLCKVAPSTQKYHMEDVHRAGGVIGILGELDRAGLLNRDVKNVLGLTLPQTLEQYDVMLTQDDAVKNMFRAGPAGIRTTQAFSQDCRWDSLDDDRANGCIRSLEHAYSKDGGLAVLYGNFAENGCIVKTAGVDDSILKFTGPAKVYESQDDAVEAILGGKVVAGDVVVIRYEGPKGGPGMQEMLYPTSFLKSMGLGKACALITDGRFSGGTSGLSIGHVSPEAASGGSIGLIEDGDLIAIDIPNRGIQLQVSDAELAARREAQEARGDKAWTPKNRERQVSFALRAYASLATSADKGAVRDKSKLGG.

Mg(2+) is bound at residue D81. Residue C122 coordinates [2Fe-2S] cluster. Mg(2+) contacts are provided by D123 and K124. Position 124 is an N6-carboxylysine (K124). C195 contacts [2Fe-2S] cluster. Mg(2+) is bound at residue E491. Residue S517 is the Proton acceptor of the active site.

This sequence belongs to the IlvD/Edd family. As to quaternary structure, homodimer. [2Fe-2S] cluster is required as a cofactor. Mg(2+) serves as cofactor.

The catalysed reaction is (2R)-2,3-dihydroxy-3-methylbutanoate = 3-methyl-2-oxobutanoate + H2O. It carries out the reaction (2R,3R)-2,3-dihydroxy-3-methylpentanoate = (S)-3-methyl-2-oxopentanoate + H2O. It functions in the pathway amino-acid biosynthesis; L-isoleucine biosynthesis; L-isoleucine from 2-oxobutanoate: step 3/4. The protein operates within amino-acid biosynthesis; L-valine biosynthesis; L-valine from pyruvate: step 3/4. Functionally, functions in the biosynthesis of branched-chain amino acids. Catalyzes the dehydration of (2R,3R)-2,3-dihydroxy-3-methylpentanoate (2,3-dihydroxy-3-methylvalerate) into 2-oxo-3-methylpentanoate (2-oxo-3-methylvalerate) and of (2R)-2,3-dihydroxy-3-methylbutanoate (2,3-dihydroxyisovalerate) into 2-oxo-3-methylbutanoate (2-oxoisovalerate), the penultimate precursor to L-isoleucine and L-valine, respectively. The chain is Dihydroxy-acid dehydratase from Escherichia coli O8 (strain IAI1).